We begin with the raw amino-acid sequence, 288 residues long: ATP synthase gamma chain (288 aa).

This sequence belongs to the ATPase gamma chain family. In terms of assembly, F-type ATPases have 2 components, CF(1) - the catalytic core - and CF(0) - the membrane proton channel. CF(1) has five subunits: alpha(3), beta(3), gamma(1), delta(1), epsilon(1). CF(0) has three main subunits: a, b and c.

It is found in the cell membrane. Produces ATP from ADP in the presence of a proton gradient across the membrane. The gamma chain is believed to be important in regulating ATPase activity and the flow of protons through the CF(0) complex. This chain is ATP synthase gamma chain, found in Macrococcus caseolyticus (strain JCSC5402) (Macrococcoides caseolyticum).